The sequence spans 154 residues: Protein X (154 aa).

A mitochondrial targeting sequence region spans residues 68-117; the sequence is PCALRFTSARRMETTVNAHRNLPKVLHKRTLGLSVMSTTDLEAYFKDCVF.

The protein belongs to the orthohepadnavirus protein X family. May form homodimer. May interact with host CEBPA, CFLAR, CREB1, DDB1, E4F1, HBXIP, HSPD1/HSP60, NFKBIA, POLR2E and SMAD4. Interacts with host SMC5-SMC6 complex and induces its degradation. Interacts with host TRPC4AP; leading to prevent ubiquitination of TRPC4AP. Interacts with host PLSCR1; this interaction promotes ubiquitination and degradation of HBx and impairs HBx-mediated cell proliferation. Post-translationally, a fraction may be phosphorylated in insect cells and HepG2 cells, a human hepatoblastoma cell line. Phosphorylated in vitro by host protein kinase C or mitogen-activated protein kinase. N-acetylated in insect cells.

The protein resides in the host cytoplasm. Its subcellular location is the host nucleus. The protein localises to the host mitochondrion. Its function is as follows. Multifunctional protein that plays a role in silencing host antiviral defenses and promoting viral transcription. Does not seem to be essential for HBV infection. May be directly involved in development of cirrhosis and liver cancer (hepatocellular carcinoma). Most of cytosolic activities involve modulation of cytosolic calcium. The effect on apoptosis is controversial depending on the cell types in which the studies have been conducted. May induce apoptosis by localizing in mitochondria and causing loss of mitochondrial membrane potential. May also modulate apoptosis by binding host CFLAR, a key regulator of the death-inducing signaling complex (DISC). Promotes viral transcription by using the host E3 ubiquitin ligase DDB1 to target the SMC5-SMC6 complex to proteasomal degradation. This host complex would otherwise bind to viral episomal DNA, and prevents its transcription. Moderately stimulates transcription of many different viral and cellular transcription elements. Promoters and enhancers stimulated by HBx contain DNA binding sites for NF-kappa-B, AP-1, AP-2, c-EBP, ATF/CREB, or the calcium-activated factor NF-AT. This Hepatitis B virus genotype B1 (isolate Japan/Yamagata-2/1998) (HBV-B) protein is Protein X.